Consider the following 303-residue polypeptide: Glutathione transport system permease protein GsiD (303 aa).

The next 6 helical transmembrane spans lie at 40–60 (AMTA…ARWI), 105–125 (LAAG…LGLL), 144–164 (LFAF…GSGI), 165–185 (ANVI…LVRG), 222–242 (IVVF…SLSF), and 266–286 (VIAP…VLAF). The ABC transmembrane type-1 domain maps to 101-290 (AQISLAAGVF…LTVLAFNLLG (190 aa)).

Belongs to the binding-protein-dependent transport system permease family. In terms of assembly, the complex is composed of two ATP-binding proteins (GsiA), two transmembrane proteins (GsiC and GsiD) and a solute-binding protein (GsiB).

Its subcellular location is the cell inner membrane. In terms of biological role, part of the ABC transporter complex GsiABCD involved in glutathione import. Probably responsible for the translocation of the substrate across the membrane. This Shigella dysenteriae serotype 1 (strain Sd197) protein is Glutathione transport system permease protein GsiD.